The sequence spans 55 residues: ATP synthase F(0) complex subunit 8 (55 aa).

Residues 10–30 (FPIMMLSWLIFSLIIQPKLLL) traverse the membrane as a helical segment. The disordered stretch occupies residues 35–55 (NPPSNKTTTTTRSNPWTWPWT). A compositionally biased stretch (low complexity) spans 37–55 (PSNKTTTTTRSNPWTWPWT).

It belongs to the ATPase protein 8 family. Component of the ATP synthase complex composed at least of ATP5F1A/subunit alpha, ATP5F1B/subunit beta, ATP5MC1/subunit c (homooctomer), MT-ATP6/subunit a, MT-ATP8/subunit 8, ATP5ME/subunit e, ATP5MF/subunit f, ATP5MG/subunit g, ATP5MK/subunit k, ATP5MJ/subunit j, ATP5F1C/subunit gamma, ATP5F1D/subunit delta, ATP5F1E/subunit epsilon, ATP5PF/subunit F6, ATP5PB/subunit b, ATP5PD/subunit d, ATP5PO/subunit OSCP. ATP synthase complex consists of a soluble F(1) head domain (subunits alpha(3) and beta(3)) - the catalytic core - and a membrane F(0) domain - the membrane proton channel (subunits c, a, 8, e, f, g, k and j). These two domains are linked by a central stalk (subunits gamma, delta, and epsilon) rotating inside the F1 region and a stationary peripheral stalk (subunits F6, b, d, and OSCP).

It localises to the mitochondrion membrane. Its function is as follows. Subunit 8, of the mitochondrial membrane ATP synthase complex (F(1)F(0) ATP synthase or Complex V) that produces ATP from ADP in the presence of a proton gradient across the membrane which is generated by electron transport complexes of the respiratory chain. ATP synthase complex consist of a soluble F(1) head domain - the catalytic core - and a membrane F(1) domain - the membrane proton channel. These two domains are linked by a central stalk rotating inside the F(1) region and a stationary peripheral stalk. During catalysis, ATP synthesis in the catalytic domain of F(1) is coupled via a rotary mechanism of the central stalk subunits to proton translocation. In vivo, can only synthesize ATP although its ATP hydrolase activity can be activated artificially in vitro. Part of the complex F(0) domain. The chain is ATP synthase F(0) complex subunit 8 from Opisthocomus hoazin (Hoatzin).